Here is a 344-residue protein sequence, read N- to C-terminus: Prickle-like protein 4 (344 aa).

One can recognise a PET domain in the interval methionine 1–glycine 81. 2 consecutive LIM zinc-binding domains span residues histidine 82–proline 147 and arginine 148–aspartate 207. Residues glycine 253–cysteine 344 form a disordered region. Positions glutamine 257–asparagine 271 are enriched in polar residues. Residues arginine 272–aspartate 296 are compositionally biased toward basic and acidic residues. Positions serine 322 to cysteine 344 are enriched in polar residues.

Belongs to the prickle / espinas / testin family. As to expression, expressed in a broad range of normal tissues as well as in hepatocellular carcinoma, breast cancer and prostate cancer tissues.

This chain is Prickle-like protein 4 (PRICKLE4), found in Homo sapiens (Human).